The primary structure comprises 471 residues: Ribulose bisphosphate carboxylase large chain (471 aa).

The substrate site is built by N115 and T165. The active-site Proton acceptor is K167. K169 contacts substrate. Mg(2+)-binding residues include K193, D195, and E196. K193 carries the post-translational modification N6-carboxylysine. H286 serves as the catalytic Proton acceptor. Positions 287, 319, and 371 each coordinate substrate.

This sequence belongs to the RuBisCO large chain family. Type I subfamily. As to quaternary structure, heterohexadecamer of 8 large chains and 8 small chains. Requires Mg(2+) as cofactor.

Its subcellular location is the carboxysome. It carries out the reaction 2 (2R)-3-phosphoglycerate + 2 H(+) = D-ribulose 1,5-bisphosphate + CO2 + H2O. The enzyme catalyses D-ribulose 1,5-bisphosphate + O2 = 2-phosphoglycolate + (2R)-3-phosphoglycerate + 2 H(+). Its function is as follows. RuBisCO catalyzes two reactions: the carboxylation of D-ribulose 1,5-bisphosphate, the primary event in carbon dioxide fixation, as well as the oxidative fragmentation of the pentose substrate in the photorespiration process. Both reactions occur simultaneously and in competition at the same active site. This chain is Ribulose bisphosphate carboxylase large chain, found in Synechococcus sp. (strain CC9605).